A 252-amino-acid chain; its full sequence is Geranylgeranylglyceryl phosphate synthase (252 aa).

Positions 27 and 56 each coordinate Mg(2+). Sn-glycerol 1-phosphate-binding positions include 175–181 (YLEAGSG), 206–207 (GG), and 228–229 (GT).

The protein belongs to the GGGP/HepGP synthase family. Group II subfamily. Mg(2+) is required as a cofactor.

Its subcellular location is the cytoplasm. The catalysed reaction is sn-glycerol 1-phosphate + (2E,6E,10E)-geranylgeranyl diphosphate = sn-3-O-(geranylgeranyl)glycerol 1-phosphate + diphosphate. It participates in membrane lipid metabolism; glycerophospholipid metabolism. Functionally, prenyltransferase that catalyzes the transfer of the geranylgeranyl moiety of geranylgeranyl diphosphate (GGPP) to the C3 hydroxyl of sn-glycerol-1-phosphate (G1P). This reaction is the first ether-bond-formation step in the biosynthesis of archaeal membrane lipids. This chain is Geranylgeranylglyceryl phosphate synthase, found in Pyrococcus abyssi (strain GE5 / Orsay).